The primary structure comprises 336 residues: Mitochondrial import receptor subunit TOM40 homolog (336 aa).

The tract at residues 1-58 (MGNVLAASSPAPPPAGSPPVPGLVSVPPGFTMPPVAGLTPTPDKKEPQEERLPNPGTF) is disordered. A compositionally biased stretch (pro residues) spans 10–21 (PAPPPAGSPPVP). Positions 42 to 52 (PDKKEPQEERL) are enriched in basic and acidic residues.

The protein belongs to the Tom40 family. As to quaternary structure, forms part of the preprotein translocase complex of the outer mitochondrial membrane (TOM complex). Interacts with mitochondrial targeting sequences.

It is found in the mitochondrion outer membrane. Channel-forming protein essential for import of protein precursors into mitochondria. The protein is Mitochondrial import receptor subunit TOM40 homolog (tomm40) of Xenopus laevis (African clawed frog).